The primary structure comprises 143 residues: uncharacterized protein (143 aa).

Positions 5 to 137 (DARLASDLSL…LRSAADLMLA (133 aa)) constitute an HTH marR-type domain. The H-T-H motif DNA-binding region spans 51 to 74 (PGALAIRERVRPPSMTRVIASLAD).

Homodimer.

This is an uncharacterized protein from Mycobacterium bovis (strain ATCC BAA-935 / AF2122/97).